A 616-amino-acid polypeptide reads, in one-letter code: Elongation factor 4 (616 aa).

The tr-type G domain maps to 17–203 (ERIRNFCIIA…RVCELVPAPV (187 aa)). GTP contacts are provided by residues 29-34 (DHGKST) and 150-153 (NKID).

This sequence belongs to the TRAFAC class translation factor GTPase superfamily. Classic translation factor GTPase family. LepA subfamily.

It is found in the cell membrane. The enzyme catalyses GTP + H2O = GDP + phosphate + H(+). Required for accurate and efficient protein synthesis under certain stress conditions. May act as a fidelity factor of the translation reaction, by catalyzing a one-codon backward translocation of tRNAs on improperly translocated ribosomes. Back-translocation proceeds from a post-translocation (POST) complex to a pre-translocation (PRE) complex, thus giving elongation factor G a second chance to translocate the tRNAs correctly. Binds to ribosomes in a GTP-dependent manner. This Corynebacterium jeikeium (strain K411) protein is Elongation factor 4.